The following is a 179-amino-acid chain: Auxin-induced protein IAA6 (179 aa).

An EAR-like (transcriptional repression) motif is present at residues 13–17; the sequence is LRLGL. The interval 31–52 is disordered; it reads FSEIDGGVEENGGSGDRKSVDK. One can recognise a PB1 domain in the interval 75–163; sequence KMYMKVSMDG…KRLRIMKRSD (89 aa).

This sequence belongs to the Aux/IAA family. As to quaternary structure, homodimers and heterodimers.

The protein localises to the nucleus. Its function is as follows. Aux/IAA proteins are short-lived transcriptional factors that function as repressors of early auxin response genes at low auxin concentrations. Repression is thought to result from the interaction with auxin response factors (ARFs), proteins that bind to the auxin-responsive promoter element (AuxRE). Formation of heterodimers with ARF proteins may alter their ability to modulate early auxin response genes expression. In Pisum sativum (Garden pea), this protein is Auxin-induced protein IAA6 (IAA6).